Consider the following 626-residue polypeptide: Zinc finger protein 471 (626 aa).

Residues 14 to 85 (VTFKDVAIDF…TSEMTRSPFS (72 aa)) enclose the KRAB domain. C2H2-type zinc fingers lie at residues 206-228 (FKCN…FRIH), 234-256 (YACE…HRTH), 262-284 (FECK…QRIH), 290-312 (YKCK…QRIH), 318-340 (YECK…QRCH), 346-369 (YECI…RSYH), 375-397 (FNCI…RRIH), 403-425 (YKCG…QRIH), 431-453 (YECD…QRVH), 459-481 (YECK…LRIH), 487-509 (YECK…QRIH), 515-537 (YECI…QKTH), 543-565 (YECN…QRIH), 571-593 (YKCT…QRLH), and 599-621 (YQCF…QRSH).

This sequence belongs to the krueppel C2H2-type zinc-finger protein family.

Its subcellular location is the nucleus. May be involved in transcriptional regulation. In Homo sapiens (Human), this protein is Zinc finger protein 471 (ZNF471).